The following is a 1070-amino-acid chain: RecBCD enzyme subunit RecC (1070 aa).

The protein belongs to the RecC family. In terms of assembly, heterotrimer of RecB, RecC and RecD. All subunits contribute to DNA-binding.

In terms of biological role, a helicase/nuclease that prepares dsDNA breaks (DSB) for recombinational DNA repair. Binds to DSBs and unwinds DNA via a highly rapid and processive ATP-dependent bidirectional helicase activity. Unwinds dsDNA until it encounters a Chi (crossover hotspot instigator) sequence from the 3' direction. Cuts ssDNA a few nucleotides 3' to the Chi site. The properties and activities of the enzyme are changed at Chi. The Chi-altered holoenzyme produces a long 3'-ssDNA overhang and facilitates RecA-binding to the ssDNA for homologous DNA recombination and repair. Holoenzyme degrades any linearized DNA that is unable to undergo homologous recombination. In the holoenzyme this subunit recognizes the wild-type Chi sequence, and when added to isolated RecB increases its ATP-dependent helicase processivity. The chain is RecBCD enzyme subunit RecC from Buchnera aphidicola subsp. Acyrthosiphon pisum (strain APS) (Acyrthosiphon pisum symbiotic bacterium).